The chain runs to 411 residues: Serine--tRNA ligase (411 aa).

226-228 (TSE) serves as a coordination point for L-serine. Position 257–259 (257–259 (RQE)) interacts with ATP. L-serine is bound at residue Glu280. An ATP-binding site is contributed by 344–347 (EISS). Ser379 contacts L-serine.

This sequence belongs to the class-II aminoacyl-tRNA synthetase family. Type-1 seryl-tRNA synthetase subfamily. In terms of assembly, homodimer. The tRNA molecule binds across the dimer.

It is found in the cytoplasm. It catalyses the reaction tRNA(Ser) + L-serine + ATP = L-seryl-tRNA(Ser) + AMP + diphosphate + H(+). The enzyme catalyses tRNA(Sec) + L-serine + ATP = L-seryl-tRNA(Sec) + AMP + diphosphate + H(+). It functions in the pathway aminoacyl-tRNA biosynthesis; selenocysteinyl-tRNA(Sec) biosynthesis; L-seryl-tRNA(Sec) from L-serine and tRNA(Sec): step 1/1. Its function is as follows. Catalyzes the attachment of serine to tRNA(Ser). Is also able to aminoacylate tRNA(Sec) with serine, to form the misacylated tRNA L-seryl-tRNA(Sec), which will be further converted into selenocysteinyl-tRNA(Sec). The protein is Serine--tRNA ligase of Campylobacter lari (strain RM2100 / D67 / ATCC BAA-1060).